A 702-amino-acid chain; its full sequence is Phosphoglycerol transferase I (702 aa).

The next 3 membrane-spanning stretches (helical) occupy residues 5–24 (LLVS…RLAW), 73–95 (GYIA…VRIR), and 102–124 (GGGA…SPLY).

It belongs to the OpgB family.

The protein resides in the cell inner membrane. It catalyses the reaction a phosphatidylglycerol + a membrane-derived-oligosaccharide D-glucose = a 1,2-diacyl-sn-glycerol + a membrane-derived-oligosaccharide 6-(glycerophospho)-D-glucose.. Its pathway is glycan metabolism; osmoregulated periplasmic glucan (OPG) biosynthesis. Functionally, transfers a phosphoglycerol residue from phosphatidylglycerol to the membrane-bound nascent glucan backbones. The polypeptide is Phosphoglycerol transferase I (Xanthomonas axonopodis pv. citri (strain 306)).